Consider the following 516-residue polypeptide: Rho guanine nucleotide exchange factor 9 (516 aa).

The SH3 domain maps to 8 to 67 (DSIVSAEAVWDHVTMANRELAFKAGDVIKVLDASNKDWWWGQIDDEEGWFPASFVRLWVN). The tract at residues 100–110 (RDQMRANVINE) is interaction with GPHN. One can recognise a DH domain in the interval 103–287 (MRANVINEIM…RNVTQQINER (185 aa)). Residues 318–425 (ELIYTGEMAW…WLRAFREERK (108 aa)) enclose the PH domain. The interval 453–480 (PKQKGVNSARSVPPSYPPPQDPLNHGQY) is disordered. Residue S502 is modified to Phosphoserine.

Interacts with GPHN. In terms of tissue distribution, detected in brain. Detected at low levels in heart.

The protein localises to the cytoplasm. It is found in the postsynaptic density. In terms of biological role, acts as a guanine nucleotide exchange factor (GEF) for CDC42. Promotes formation of GPHN clusters. In Homo sapiens (Human), this protein is Rho guanine nucleotide exchange factor 9 (ARHGEF9).